Here is a 240-residue protein sequence, read N- to C-terminus: Ribosomal RNA small subunit methyltransferase G (240 aa).

Residues glycine 80, phenylalanine 85, 131–132, and arginine 150 each bind S-adenosyl-L-methionine; that span reads AE.

It belongs to the methyltransferase superfamily. RNA methyltransferase RsmG family.

The protein resides in the cytoplasm. In terms of biological role, specifically methylates the N7 position of a guanine in 16S rRNA. The protein is Ribosomal RNA small subunit methyltransferase G of Dictyoglomus thermophilum (strain ATCC 35947 / DSM 3960 / H-6-12).